We begin with the raw amino-acid sequence, 248 residues long: 4-hydroxy-tetrahydrodipicolinate reductase (248 aa).

NAD(+) is bound by residues 8-13 (GAKGRM), 75-77 (GTT), and 99-102 (ATNM). His131 serves as the catalytic Proton donor/acceptor. His132 is a (S)-2,3,4,5-tetrahydrodipicolinate binding site. Lys135 acts as the Proton donor in catalysis. 141–142 (GT) contacts (S)-2,3,4,5-tetrahydrodipicolinate.

Belongs to the DapB family.

It localises to the cytoplasm. It catalyses the reaction (S)-2,3,4,5-tetrahydrodipicolinate + NAD(+) + H2O = (2S,4S)-4-hydroxy-2,3,4,5-tetrahydrodipicolinate + NADH + H(+). The catalysed reaction is (S)-2,3,4,5-tetrahydrodipicolinate + NADP(+) + H2O = (2S,4S)-4-hydroxy-2,3,4,5-tetrahydrodipicolinate + NADPH + H(+). Its pathway is amino-acid biosynthesis; L-lysine biosynthesis via DAP pathway; (S)-tetrahydrodipicolinate from L-aspartate: step 4/4. In terms of biological role, catalyzes the conversion of 4-hydroxy-tetrahydrodipicolinate (HTPA) to tetrahydrodipicolinate. This is 4-hydroxy-tetrahydrodipicolinate reductase from Campylobacter jejuni subsp. doylei (strain ATCC BAA-1458 / RM4099 / 269.97).